The primary structure comprises 134 residues: ATP synthase epsilon chain (134 aa).

The protein belongs to the ATPase epsilon chain family. F-type ATPases have 2 components, CF(1) - the catalytic core - and CF(0) - the membrane proton channel. CF(1) has five subunits: alpha(3), beta(3), gamma(1), delta(1), epsilon(1). CF(0) has three main subunits: a, b and c.

The protein resides in the cell membrane. Produces ATP from ADP in the presence of a proton gradient across the membrane. This Carboxydothermus hydrogenoformans (strain ATCC BAA-161 / DSM 6008 / Z-2901) protein is ATP synthase epsilon chain.